Consider the following 340-residue polypeptide: E3 ubiquitin ligase BIG BROTHER-related (340 aa).

Disordered stretches follow at residues 1–56 (MPME…GVGE) and 133–182 (YDED…GNSD). Positions 34–46 (NRQTGVVSDTGSG) are enriched in polar residues. Acidic residues-rich tracts occupy residues 133-164 (YDED…EDGL) and 173-182 (DDQEDDGNSD). The RING-type; atypical zinc-finger motif lies at 288 to 329 (CVICRLDYEDDEDLILLPCKHSYHSECINNWLKINKVCPVCS).

Post-translationally, auto-ubiquitinated.

It carries out the reaction S-ubiquitinyl-[E2 ubiquitin-conjugating enzyme]-L-cysteine + [acceptor protein]-L-lysine = [E2 ubiquitin-conjugating enzyme]-L-cysteine + N(6)-ubiquitinyl-[acceptor protein]-L-lysine.. It functions in the pathway protein modification; protein ubiquitination. E3 ubiquitin-ligase probably involved in organ size regulation. This is E3 ubiquitin ligase BIG BROTHER-related (BBR) from Arabidopsis thaliana (Mouse-ear cress).